The following is a 406-amino-acid chain: Probable tRNA sulfurtransferase (406 aa).

The 103-residue stretch at 60–162 (PEAKARLQDT…PGAALLEVER (103 aa)) folds into the THUMP domain. ATP contacts are provided by residues 180-181 (LL), 205-206 (HF), arginine 262, glycine 284, and glutamine 293.

Belongs to the ThiI family.

The protein localises to the cytoplasm. The enzyme catalyses [ThiI sulfur-carrier protein]-S-sulfanyl-L-cysteine + a uridine in tRNA + 2 reduced [2Fe-2S]-[ferredoxin] + ATP + H(+) = [ThiI sulfur-carrier protein]-L-cysteine + a 4-thiouridine in tRNA + 2 oxidized [2Fe-2S]-[ferredoxin] + AMP + diphosphate. The catalysed reaction is [ThiS sulfur-carrier protein]-C-terminal Gly-Gly-AMP + S-sulfanyl-L-cysteinyl-[cysteine desulfurase] + AH2 = [ThiS sulfur-carrier protein]-C-terminal-Gly-aminoethanethioate + L-cysteinyl-[cysteine desulfurase] + A + AMP + 2 H(+). The protein operates within cofactor biosynthesis; thiamine diphosphate biosynthesis. Catalyzes the ATP-dependent transfer of a sulfur to tRNA to produce 4-thiouridine in position 8 of tRNAs, which functions as a near-UV photosensor. Also catalyzes the transfer of sulfur to the sulfur carrier protein ThiS, forming ThiS-thiocarboxylate. This is a step in the synthesis of thiazole, in the thiamine biosynthesis pathway. The sulfur is donated as persulfide by IscS. This chain is Probable tRNA sulfurtransferase, found in Thermus thermophilus (strain ATCC 27634 / DSM 579 / HB8).